A 177-amino-acid chain; its full sequence is Probable chemoreceptor glutamine deamidase CheD (177 aa).

Belongs to the CheD family.

The catalysed reaction is L-glutaminyl-[protein] + H2O = L-glutamyl-[protein] + NH4(+). Functionally, probably deamidates glutamine residues to glutamate on methyl-accepting chemotaxis receptors (MCPs), playing an important role in chemotaxis. The protein is Probable chemoreceptor glutamine deamidase CheD of Pseudomonas fluorescens (strain SBW25).